Here is a 325-residue protein sequence, read N- to C-terminus: Cytochrome f (325 aa).

Positions 1-40 (MSKINLSTMWSSFIKKIAKTILVAIACISLFLTSSPAANA) are cleaved as a signal peptide. The heme site is built by Tyr41, Cys62, Cys65, and His66. Residues 291 to 311 (VKWLMAFFALVMLAQIMLVLK) traverse the membrane as a helical segment.

This sequence belongs to the cytochrome f family. As to quaternary structure, the 4 large subunits of the cytochrome b6-f complex are cytochrome b6, subunit IV (17 kDa polypeptide, PetD), cytochrome f and the Rieske protein, while the 4 small subunits are PetG, PetL, PetM and PetN. The complex functions as a dimer. Requires heme as cofactor.

The protein resides in the cellular thylakoid membrane. In terms of biological role, component of the cytochrome b6-f complex, which mediates electron transfer between photosystem II (PSII) and photosystem I (PSI), cyclic electron flow around PSI, and state transitions. The sequence is that of Cytochrome f from Trichodesmium erythraeum (strain IMS101).